We begin with the raw amino-acid sequence, 403 residues long: CCA-adding enzyme (403 aa).

Positions 32 and 35 each coordinate ATP. Positions 32 and 35 each coordinate CTP. Mg(2+) contacts are provided by Asp-45 and Asp-47. 5 residues coordinate ATP: Arg-116, Asp-159, Arg-162, Arg-165, and Arg-168. The CTP site is built by Arg-116, Asp-159, Arg-162, Arg-165, and Arg-168.

The protein belongs to the tRNA nucleotidyltransferase/poly(A) polymerase family. Bacterial CCA-adding enzyme type 3 subfamily. Homodimer. It depends on Mg(2+) as a cofactor.

It catalyses the reaction a tRNA precursor + 2 CTP + ATP = a tRNA with a 3' CCA end + 3 diphosphate. The catalysed reaction is a tRNA with a 3' CCA end + 2 CTP + ATP = a tRNA with a 3' CCACCA end + 3 diphosphate. Its function is as follows. Catalyzes the addition and repair of the essential 3'-terminal CCA sequence in tRNAs without using a nucleic acid template. Adds these three nucleotides in the order of C, C, and A to the tRNA nucleotide-73, using CTP and ATP as substrates and producing inorganic pyrophosphate. tRNA 3'-terminal CCA addition is required both for tRNA processing and repair. Also involved in tRNA surveillance by mediating tandem CCA addition to generate a CCACCA at the 3' terminus of unstable tRNAs. While stable tRNAs receive only 3'-terminal CCA, unstable tRNAs are marked with CCACCA and rapidly degraded. This is CCA-adding enzyme from Leuconostoc citreum (strain KM20).